The sequence spans 936 residues: Sine oculis-binding protein homolog A (936 aa).

Residues 1-14 show a composition bias toward basic and acidic residues; that stretch reads MAEMEKEGRPPESK. Disordered stretches follow at residues 1-46 and 108-151; these read MAEM…GQAG and ASTL…HGGL. Residues 108–144 show a composition bias toward polar residues; sequence ASTLENSSGSPPHANSSGSTPTSRNGVTAESSVNPSS. FCS-type zinc fingers lie at residues 169–207 and 247–287; these read EDSS…KCFA and LKTN…KCLN. Disordered regions lie at residues 311–330, 336–424, 486–511, 574–632, 697–727, and 842–877; these read LPTS…LTPE, LSEL…VMTP, SPHL…HPAA, NPQR…KQTE, PPPA…DTYS, and DSAG…EDHA. The segment covering 349 to 382 has biased composition (low complexity); sequence GATIAGPSGSTSGSPSEAGTVCSSSSSSSSSSSS. Positions 395–404 are enriched in pro residues; the sequence is SLPPPHPPPI. Polar residues-rich tracts occupy residues 617-632, 708-717, and 850-859; these read PPNS…KQTE, DGSTSISTGT, and NDQSAITTGT.

It belongs to the SOBP family.

Implicated in development of the cochlea. This is Sine oculis-binding protein homolog A (sobpa) from Danio rerio (Zebrafish).